We begin with the raw amino-acid sequence, 445 residues long: Histone acetyltransferase of the MYST family 2 (445 aa).

The span at 1–23 shows a compositional bias: polar residues; sequence MGSSANTETNGNAPPPSSNQKPP. The tract at residues 1 to 58 is disordered; sequence MGSSANTETNGNAPPPSSNQKPPATNGVDGSHPPPPPLTPDQAIIESDPSKKRKMGML. Residues 60–118 enclose the Tudor-knot domain; the sequence is LEVGTRVMCRWRDGKHHPVKVIERRRIHNGGQNDYEYYVHYTEFNRRLDEWTQLDQLDL. An MYST-type HAT domain is found at 169 to 440; it reads TKVKNISTIE…VDASKLIWTP (272 aa). A C2HC MYST-type zinc finger spans residues 202–227; that stretch reads LFFCEFCLNFMKRKEQLQRHMRKCDL. K269 is modified (N6-acetyllysine; by autocatalysis). Acetyl-CoA is bound by residues 312–314 and 319–325; these read ILT and QRKGYGK. The active-site Proton donor/acceptor is the E345. S349 is an acetyl-CoA binding site.

This sequence belongs to the MYST (SAS/MOZ) family. Interacts with MRG1 and MRG2. Autoacetylation at Lys-269 is required for proper function. Expressed in cotyledons, leaves, stems, roots and, at higher levels in developing flowers, particularly in the anthers and gynoecia. Constitutively expressed in all tissues, predominantly in shoot apical meristem.

Its subcellular location is the nucleus. It catalyses the reaction L-lysyl-[protein] + acetyl-CoA = N(6)-acetyl-L-lysyl-[protein] + CoA + H(+). Its function is as follows. Histone acetyltransferase which may be involved in transcriptional activation. Acetylates 'Lys-5' of histone H4 (H4K5ac). Essential for gametophyte development. Negative regulator of flowering controlling the H4K5ac levels in the FLC chromatin. The polypeptide is Histone acetyltransferase of the MYST family 2 (Arabidopsis thaliana (Mouse-ear cress)).